The primary structure comprises 187 residues: UPF0301 protein KPK_0728 (187 aa).

The protein belongs to the UPF0301 (AlgH) family.

This chain is UPF0301 protein KPK_0728, found in Klebsiella pneumoniae (strain 342).